Consider the following 147-residue polypeptide: DNA-directed RNA polymerase I subunit rpa14 (147 aa).

The disordered stretch occupies residues 71 to 147 (VQGPPTEELI…TQGVGEKEQS (77 aa)). Over residues 74–84 (PPTEELIIPPE) the composition is skewed to low complexity. Over residues 87-111 (LETKEEESLKHAREENDDLHLDKET) the composition is skewed to basic and acidic residues. The span at 112–124 (KKRLKKEKKKAAR) shows a compositional bias: basic residues. Residues 125–135 (REKEEARKAKA) are compositionally biased toward basic and acidic residues.

As to quaternary structure, component of the RNA polymerase I (Pol I) complex consisting of 14 subunits. Part of a Pol I subcomplex consisting of the subunits A14 and A43. Interacts with rpa43. In terms of processing, phosphorylated.

Its subcellular location is the nucleus. It localises to the nucleolus. Its function is as follows. DNA-dependent RNA polymerase catalyzes the transcription of DNA into RNA using the four ribonucleoside triphosphates as substrates. Component of RNA polymerase I which synthesizes ribosomal RNA precursors. A14 seems to play a role in the stability of Pol I subunit A43 and association of rrn3 to Pol I. This is DNA-directed RNA polymerase I subunit rpa14 (ker1) from Schizosaccharomyces pombe (strain 972 / ATCC 24843) (Fission yeast).